A 185-amino-acid chain; its full sequence is Ribosome-recycling factor (185 aa).

The protein belongs to the RRF family.

Its subcellular location is the cytoplasm. Responsible for the release of ribosomes from messenger RNA at the termination of protein biosynthesis. May increase the efficiency of translation by recycling ribosomes from one round of translation to another. In Bacillus cereus (strain B4264), this protein is Ribosome-recycling factor.